We begin with the raw amino-acid sequence, 384 residues long: D-galactosamine-6-phosphate deaminase AgaS (384 aa).

SIS domains are found at residues 45 to 197 and 215 to 364; these read LEPL…SQTF and SEGV…PDTP.

This sequence belongs to the SIS family. AgaS subfamily.

It carries out the reaction D-galactosamine 6-phosphate + H2O = D-tagatopyranose 1-phosphate + NH4(+). Functionally, catalyzes the isomerization-deamination of galactosamine 6-phosphate to form tagatofuranose 6-phosphate and ammonium ion. The protein is D-galactosamine-6-phosphate deaminase AgaS of Escherichia coli.